Consider the following 858-residue polypeptide: DNA mismatch repair protein MutS (858 aa).

G613–S620 lines the ATP pocket.

This sequence belongs to the DNA mismatch repair MutS family.

Its function is as follows. This protein is involved in the repair of mismatches in DNA. It is possible that it carries out the mismatch recognition step. This protein has a weak ATPase activity. This Dehalococcoides mccartyi (strain ATCC BAA-2266 / KCTC 15142 / 195) (Dehalococcoides ethenogenes (strain 195)) protein is DNA mismatch repair protein MutS.